The chain runs to 128 residues: L-ectoine synthase (128 aa).

It belongs to the ectoine synthase family.

The enzyme catalyses (2S)-4-acetamido-2-aminobutanoate = L-ectoine + H2O. The protein operates within amine and polyamine biosynthesis; ectoine biosynthesis; L-ectoine from L-aspartate 4-semialdehyde: step 3/3. Its function is as follows. Catalyzes the circularization of gamma-N-acetyl-alpha,gamma-diaminobutyric acid (ADABA) to ectoine (1,4,5,6-tetrahydro-2-methyl-4-pyrimidine carboxylic acid), which is an excellent osmoprotectant. The sequence is that of L-ectoine synthase from Aliivibrio fischeri (strain MJ11) (Vibrio fischeri).